A 294-amino-acid polypeptide reads, in one-letter code: 4-hydroxy-tetrahydrodipicolinate synthase (294 aa).

Residue T47 participates in pyruvate binding. Residue Y136 is the Proton donor/acceptor of the active site. The active-site Schiff-base intermediate with substrate is K164. V206 lines the pyruvate pocket.

The protein belongs to the DapA family. In terms of assembly, homotetramer; dimer of dimers.

The protein localises to the cytoplasm. The catalysed reaction is L-aspartate 4-semialdehyde + pyruvate = (2S,4S)-4-hydroxy-2,3,4,5-tetrahydrodipicolinate + H2O + H(+). The protein operates within amino-acid biosynthesis; L-lysine biosynthesis via DAP pathway; (S)-tetrahydrodipicolinate from L-aspartate: step 3/4. Functionally, catalyzes the condensation of (S)-aspartate-beta-semialdehyde [(S)-ASA] and pyruvate to 4-hydroxy-tetrahydrodipicolinate (HTPA). The chain is 4-hydroxy-tetrahydrodipicolinate synthase from Cyanothece sp. (strain PCC 7425 / ATCC 29141).